The chain runs to 199 residues: Recombination protein RecR (199 aa).

The C4-type zinc finger occupies 57–72 (CSVCGNLTDDDPCNIC). One can recognise a Toprim domain in the interval 80–176 (STVLVVEDSK…TVTRLARGLA (97 aa)).

Belongs to the RecR family.

May play a role in DNA repair. It seems to be involved in an RecBC-independent recombinational process of DNA repair. It may act with RecF and RecO. This is Recombination protein RecR from Streptococcus mutans serotype c (strain ATCC 700610 / UA159).